The chain runs to 161 residues: 2-C-methyl-D-erythritol 2,4-cyclodiphosphate synthase (161 aa).

Residues aspartate 10 and histidine 12 each coordinate a divalent metal cation. Residues 10–12 (DVH) and 36–37 (HS) each bind 4-CDP-2-C-methyl-D-erythritol 2-phosphate. Histidine 44 lines the a divalent metal cation pocket. 4-CDP-2-C-methyl-D-erythritol 2-phosphate-binding positions include 58-60 (DIG), 63-67 (FSDTD), and arginine 144.

The protein belongs to the IspF family. As to quaternary structure, homotrimer. Requires a divalent metal cation as cofactor.

The catalysed reaction is 4-CDP-2-C-methyl-D-erythritol 2-phosphate = 2-C-methyl-D-erythritol 2,4-cyclic diphosphate + CMP. The protein operates within isoprenoid biosynthesis; isopentenyl diphosphate biosynthesis via DXP pathway; isopentenyl diphosphate from 1-deoxy-D-xylulose 5-phosphate: step 4/6. In terms of biological role, involved in the biosynthesis of isopentenyl diphosphate (IPP) and dimethylallyl diphosphate (DMAPP), two major building blocks of isoprenoid compounds. Catalyzes the conversion of 4-diphosphocytidyl-2-C-methyl-D-erythritol 2-phosphate (CDP-ME2P) to 2-C-methyl-D-erythritol 2,4-cyclodiphosphate (ME-CPP) with a corresponding release of cytidine 5-monophosphate (CMP). The polypeptide is 2-C-methyl-D-erythritol 2,4-cyclodiphosphate synthase (Burkholderia lata (strain ATCC 17760 / DSM 23089 / LMG 22485 / NCIMB 9086 / R18194 / 383)).